The chain runs to 351 residues: Inositol monophosphatase 3 (351 aa).

The chain crosses the membrane as a helical span at residues leucine 11–phenylalanine 31. Mg(2+)-binding residues include glutamate 121, aspartate 162, leucine 164, aspartate 165, and aspartate 288. Glutamate 121 provides a ligand contact to substrate. Residues leucine 164–threonine 167 and aspartate 288 contribute to the substrate site.

It belongs to the inositol monophosphatase superfamily. Requires Mg(2+) as cofactor.

The protein localises to the membrane. The enzyme catalyses a myo-inositol phosphate + H2O = myo-inositol + phosphate. It participates in polyol metabolism; myo-inositol biosynthesis; myo-inositol from D-glucose 6-phosphate: step 2/2. In Xenopus laevis (African clawed frog), this protein is Inositol monophosphatase 3 (bpnt2).